We begin with the raw amino-acid sequence, 137 residues long: Profilin-3 (137 aa).

The protein belongs to the profilin family. In terms of assembly, interacts with ACTRT3. As to expression, testis specific.

It is found in the cytoplasm. The protein resides in the cytoskeleton. It localises to the nucleus. Its function is as follows. Binds to actin and affects the structure of the cytoskeleton. Slightly reduces actin polymerization. Binds to poly-L-proline, phosphatidylinositol 3-phosphate (PtdIns(3)P), phosphatidylinositol 4,5-bisphosphate (PtdIns(4,5)P2) and phosphatidylinositol 4-phosphate (PtdIns(4)P). May be involved in spermatogenesis. The sequence is that of Profilin-3 (PFN3) from Homo sapiens (Human).